The following is a 92-amino-acid chain: Small ribosomal subunit protein uS19 (92 aa).

The protein belongs to the universal ribosomal protein uS19 family.

Functionally, protein S19 forms a complex with S13 that binds strongly to the 16S ribosomal RNA. This is Small ribosomal subunit protein uS19 from Photobacterium profundum (strain SS9).